The chain runs to 327 residues: Methionyl-tRNA formyltransferase (327 aa).

A (6S)-5,6,7,8-tetrahydrofolate-binding site is contributed by 122 to 125; it reads SLLP.

Belongs to the Fmt family.

It carries out the reaction L-methionyl-tRNA(fMet) + (6R)-10-formyltetrahydrofolate = N-formyl-L-methionyl-tRNA(fMet) + (6S)-5,6,7,8-tetrahydrofolate + H(+). In terms of biological role, attaches a formyl group to the free amino group of methionyl-tRNA(fMet). The formyl group appears to play a dual role in the initiator identity of N-formylmethionyl-tRNA by promoting its recognition by IF2 and preventing the misappropriation of this tRNA by the elongation apparatus. The sequence is that of Methionyl-tRNA formyltransferase from Ralstonia nicotianae (strain ATCC BAA-1114 / GMI1000) (Ralstonia solanacearum).